The primary structure comprises 825 residues: Translation initiation factor IF-2 (825 aa).

Basic and acidic residues-rich tracts occupy residues 1 to 19 (MTKK…DNKK), 35 to 45 (RKGEKKTEGKR), 70 to 98 (LLKD…EYKK), and 113 to 122 (KKVESVEKPA). Residues 1-239 (MTKKQENETS…TQRKDRPLPE (239 aa)) form a disordered region. Over residues 158–169 (PSSSRRPSSRPS) the composition is skewed to low complexity. The segment covering 181-191 (GRRRKSGKPGR) has biased composition (basic residues). The segment covering 194–208 (QNSYADQGRGANSNR) has biased composition (polar residues). Basic residues predominate over residues 211–220 (QRKRKNKKHQ). A tr-type G domain is found at 326 to 495 (VRPPVVTIMG…ILEADMLELK (170 aa)). Residues 335–342 (GHVDHGKT) are G1. 335–342 (GHVDHGKT) serves as a coordination point for GTP. The interval 360–364 (GITQN) is G2. Positions 381 to 384 (DTPG) are G3. GTP-binding positions include 381–385 (DTPGH) and 435–438 (NKMD). Residues 435-438 (NKMD) are G4. Residues 471 to 473 (SAK) form a G5 region.

This sequence belongs to the TRAFAC class translation factor GTPase superfamily. Classic translation factor GTPase family. IF-2 subfamily.

It localises to the cytoplasm. Functionally, one of the essential components for the initiation of protein synthesis. Protects formylmethionyl-tRNA from spontaneous hydrolysis and promotes its binding to the 30S ribosomal subunits. Also involved in the hydrolysis of GTP during the formation of the 70S ribosomal complex. This Lactobacillus delbrueckii subsp. bulgaricus (strain ATCC 11842 / DSM 20081 / BCRC 10696 / JCM 1002 / NBRC 13953 / NCIMB 11778 / NCTC 12712 / WDCM 00102 / Lb 14) protein is Translation initiation factor IF-2.